We begin with the raw amino-acid sequence, 262 residues long: Type III pantothenate kinase (262 aa).

Asp-10 to Val-17 serves as a coordination point for ATP. Position 110-113 (Gly-110–Arg-113) interacts with substrate. The active-site Proton acceptor is Asp-112. Asp-134 is a binding site for K(+). An ATP-binding site is contributed by Thr-137. A substrate-binding site is contributed by Thr-189.

Belongs to the type III pantothenate kinase family. Homodimer. Requires NH4(+) as cofactor. The cofactor is K(+).

Its subcellular location is the cytoplasm. It carries out the reaction (R)-pantothenate + ATP = (R)-4'-phosphopantothenate + ADP + H(+). It participates in cofactor biosynthesis; coenzyme A biosynthesis; CoA from (R)-pantothenate: step 1/5. Catalyzes the phosphorylation of pantothenate (Pan), the first step in CoA biosynthesis. This chain is Type III pantothenate kinase, found in Deinococcus radiodurans (strain ATCC 13939 / DSM 20539 / JCM 16871 / CCUG 27074 / LMG 4051 / NBRC 15346 / NCIMB 9279 / VKM B-1422 / R1).